Consider the following 227-residue polypeptide: Phage shock protein A homolog (227 aa).

Residues 33 to 125 are a coiled coil; it reads LRNMNSDLAK…AQMRKMHDKL (93 aa). The interval 191–211 is disordered; that stretch reads SAPQDDMADLSAKYDTGGSSQ.

This sequence belongs to the PspA/Vipp/IM30 family.

The protein is Phage shock protein A homolog (ydjF) of Bacillus subtilis (strain 168).